We begin with the raw amino-acid sequence, 64 residues long: Cytochrome c oxidase subunit 9, mitochondrial (64 aa).

At 1–15 the chain is on the mitochondrial matrix side; the sequence is MAATAVRPITGMLRR. The chain crosses the membrane as a helical span at residues 16–36; that stretch reads GLILDIGIALGVGFVMANGYW. The Mitochondrial intermembrane portion of the chain corresponds to 37–64; sequence YGYHMPRTNARDNYYKKLEEERAARMGA.

Belongs to the fungal cytochrome c oxidase subunit 7a family. Component of the cytochrome c oxidase (complex IV, CIV), a multisubunit enzyme composed of 11 subunits. The complex is composed of a catalytic core of 3 subunits Cox1, Cox2 and Cox3, encoded in the mitochondrial DNA, and 8 supernumerary subunits Cox4, Cox5a/Cox5, Cox6, Cox7, Cox8, Cox7a/Cox9, Cox6b/Cox12 and Cox6a/Cox13, which are encoded in the nuclear genome. The complex exists as a monomer or a dimer and forms respiratory supercomplexes (SCs) in the inner mitochondrial membrane with NADH-ubiquinone oxidoreductase (complex I, CI) and ubiquinol-cytochrome c oxidoreductase (cytochrome b-c1 complex, complex III, CIII), resulting in various different assemblies (supercomplexes I(1)IV(1), I(1)III(3)IV(2), III(2)IV(1) and III(2)IV(2) as well as larger supercomplexes of compositions like I(1)III(2)IV(5-6)).

The protein localises to the mitochondrion inner membrane. Its pathway is energy metabolism; oxidative phosphorylation. Its function is as follows. Component of the cytochrome c oxidase, the last enzyme in the mitochondrial electron transport chain which drives oxidative phosphorylation. The respiratory chain contains 3 multisubunit complexes succinate dehydrogenase (complex II, CII), ubiquinol-cytochrome c oxidoreductase (cytochrome b-c1 complex, complex III, CIII) and cytochrome c oxidase (complex IV, CIV), that cooperate to transfer electrons derived from NADH and succinate to molecular oxygen, creating an electrochemical gradient over the inner membrane that drives transmembrane transport and the ATP synthase. Cytochrome c oxidase is the component of the respiratory chain that catalyzes the reduction of oxygen to water. Electrons originating from reduced cytochrome c in the intermembrane space (IMS) are transferred via the dinuclear copper A center (CU(A)) of Cox2 and heme A of Cox1 to the active site in Cox1, a binuclear center (BNC) formed by heme A3 and copper B (CU(B)). The BNC reduces molecular oxygen to 2 water molecules using 4 electrons from cytochrome c in the IMS and 4 protons from the mitochondrial matrix. This chain is Cytochrome c oxidase subunit 9, mitochondrial (cox-17), found in Neurospora crassa (strain ATCC 24698 / 74-OR23-1A / CBS 708.71 / DSM 1257 / FGSC 987).